Here is a 199-residue protein sequence, read N- to C-terminus: Holliday junction branch migration complex subunit RuvA (199 aa).

The tract at residues 1–64 is domain I; it reads MIGRITGILL…EDGHFLYGFA (64 aa). A domain II region spans residues 65–143; the sequence is SADERAAFRQ…RALPGFGAST (79 aa). Residues 144–152 are flexible linker; that stretch reads VPGAAAQPA. Positions 152–199 are domain III; it reads ADSRSDILNALLALGYSDKEAQSALKAIPPETGVSDGIRQALKLLSKA.

The protein belongs to the RuvA family. Homotetramer. Forms an RuvA(8)-RuvB(12)-Holliday junction (HJ) complex. HJ DNA is sandwiched between 2 RuvA tetramers; dsDNA enters through RuvA and exits via RuvB. An RuvB hexamer assembles on each DNA strand where it exits the tetramer. Each RuvB hexamer is contacted by two RuvA subunits (via domain III) on 2 adjacent RuvB subunits; this complex drives branch migration. In the full resolvosome a probable DNA-RuvA(4)-RuvB(12)-RuvC(2) complex forms which resolves the HJ.

The protein localises to the cytoplasm. In terms of biological role, the RuvA-RuvB-RuvC complex processes Holliday junction (HJ) DNA during genetic recombination and DNA repair, while the RuvA-RuvB complex plays an important role in the rescue of blocked DNA replication forks via replication fork reversal (RFR). RuvA specifically binds to HJ cruciform DNA, conferring on it an open structure. The RuvB hexamer acts as an ATP-dependent pump, pulling dsDNA into and through the RuvAB complex. HJ branch migration allows RuvC to scan DNA until it finds its consensus sequence, where it cleaves and resolves the cruciform DNA. The polypeptide is Holliday junction branch migration complex subunit RuvA (Aromatoleum aromaticum (strain DSM 19018 / LMG 30748 / EbN1) (Azoarcus sp. (strain EbN1))).